A 396-amino-acid chain; its full sequence is NAD(P)H oxidoreductase RTN4IP1, mitochondrial (396 aa).

The N-terminal 40 residues, Met1–Ser40, are a transit peptide targeting the mitochondrion. The region spanning Gly52–Ile393 is the Enoyl reductase (ER) domain. The NADPH site is built by Ser214, Gly216, Val217, Ser237, Tyr255, Asn276, Leu300, Ala341, Phe343, His386, Ala387, and Arg388.

The protein belongs to the zinc-containing alcohol dehydrogenase family. Quinone oxidoreductase subfamily. As to quaternary structure, interacts with RTN4, UQCRC1 and UQCRC2. In terms of tissue distribution, widely expressed in mitochondria-enriched tissues. Found in heart, muscle, kidney, liver, brain and placenta.

It localises to the mitochondrion matrix. The protein resides in the mitochondrion outer membrane. The catalysed reaction is a 3-demethylubiquinone + NADH + 2 H(+) = a 3-demethylubiquinol + NAD(+). It carries out the reaction a 3-demethylubiquinone + NADPH + 2 H(+) = a 3-demethylubiquinol + NADP(+). The enzyme catalyses 3-demethylubiquinone-10 + NADH + 2 H(+) = 3-demethylubiquinol-10 + NAD(+). It catalyses the reaction 3-demethylubiquinone-10 + NADPH + 2 H(+) = 3-demethylubiquinol-10 + NADP(+). Its pathway is cofactor biosynthesis; ubiquinone biosynthesis. Its function is as follows. NAD(P)H oxidoreductase involved in the ubiquinone biosynthetic pathway. Required for the O-methyltransferase activity of COQ3. Able to catalyze the oxidoreduction of 3-demethylubiquinone into 3-demethylubiquinol in vitro. However, it is unclear if 3-demethylubiquinone constitutes a substrate in vivo. May also play a role in the regulation of retinal ganglion cell (RGC) neurite outgrowth, and hence in the development of the inner retina and optic nerve. Appears to be a potent inhibitor of regeneration following spinal cord injury. The polypeptide is NAD(P)H oxidoreductase RTN4IP1, mitochondrial (Homo sapiens (Human)).